The primary structure comprises 198 residues: Cytokinin riboside 5'-monophosphate phosphoribohydrolase (198 aa).

Substrate-binding positions include E91, 109-110 (RK), 126-132 (GVGTAEE), and T138.

This sequence belongs to the LOG family.

It carries out the reaction N(6)-(dimethylallyl)adenosine 5'-phosphate + H2O = N(6)-dimethylallyladenine + D-ribose 5-phosphate. The catalysed reaction is 9-ribosyl-trans-zeatin 5'-phosphate + H2O = trans-zeatin + D-ribose 5-phosphate. Functionally, catalyzes the hydrolytic removal of ribose 5'-monophosphate from nitrogen N6-modified adenosines, the final step of bioactive cytokinin synthesis. The polypeptide is Cytokinin riboside 5'-monophosphate phosphoribohydrolase (fas6) (Rhodococcoides fascians (Rhodococcus fascians)).